We begin with the raw amino-acid sequence, 222 residues long: Protein-L-isoaspartate O-methyltransferase (222 aa).

Residue S68 is part of the active site.

It belongs to the methyltransferase superfamily. L-isoaspartyl/D-aspartyl protein methyltransferase family.

It localises to the cytoplasm. It catalyses the reaction [protein]-L-isoaspartate + S-adenosyl-L-methionine = [protein]-L-isoaspartate alpha-methyl ester + S-adenosyl-L-homocysteine. Catalyzes the methyl esterification of L-isoaspartyl residues in peptides and proteins that result from spontaneous decomposition of normal L-aspartyl and L-asparaginyl residues. It plays a role in the repair and/or degradation of damaged proteins. The chain is Protein-L-isoaspartate O-methyltransferase from Koribacter versatilis (strain Ellin345).